The chain runs to 1026 residues: Multidrug resistance protein MdtC (1026 aa).

11 helical membrane passes run 15–35, 333–353, 360–380, 387–407, 431–451, 463–483, 528–548, 853–873, 897–917, 953–973, and 984–1004; these read ILIAAAITLCGILGFRLLPVA, EVEETLAISVALVILVVFLFL, LIPAVAVPVSLIGTFAAMYLC, LSLMALTIATGFVVDDAIVVL, VGFTVISMSLSLVAVFLPLLL, FAVTLSVAIGISLVVSLTLTP, LVGVVFLGTVALNIWLYIAIP, LILIVAAIATVYIVLGILYES, LFNAPFSLIALIGIMLLIGIV, PIMMTTLAALFGALPLVLSGG, and ITIVGGLVMSQLLTLYTTPVV.

Belongs to the resistance-nodulation-cell division (RND) (TC 2.A.6) family. MdtC subfamily. As to quaternary structure, part of a tripartite efflux system composed of MdtA, MdtB and MdtC. MdtC forms a heteromultimer with MdtB.

It localises to the cell inner membrane. The protein is Multidrug resistance protein MdtC of Salmonella gallinarum (strain 287/91 / NCTC 13346).